We begin with the raw amino-acid sequence, 95 residues long: Large ribosomal subunit protein bL25 (95 aa).

It belongs to the bacterial ribosomal protein bL25 family. In terms of assembly, part of the 50S ribosomal subunit; part of the 5S rRNA/L5/L18/L25 subcomplex. Contacts the 5S rRNA. Binds to the 5S rRNA independently of L5 and L18.

In terms of biological role, this is one of the proteins that binds to the 5S RNA in the ribosome where it forms part of the central protuberance. The chain is Large ribosomal subunit protein bL25 from Shewanella woodyi (strain ATCC 51908 / MS32).